The chain runs to 378 residues: UPF0754 membrane protein BALH_0780 (378 aa).

2 consecutive transmembrane segments (helical) span residues 1–21 (MNIW…GGFT) and 357–377 (YLGA…LLFL).

The protein belongs to the UPF0754 family.

It localises to the cell membrane. This is UPF0754 membrane protein BALH_0780 from Bacillus thuringiensis (strain Al Hakam).